Reading from the N-terminus, the 333-residue chain is Ketol-acid reductoisomerase (NAD(P)(+)) (333 aa).

Residues Ala2–Thr182 form the KARI N-terminal Rossmann domain. NADP(+) is bound by residues Tyr25 to Gln28, Ser51, and Asp83 to Gln86. His108 is a catalytic residue. Gly134 lines the NADP(+) pocket. The KARI C-terminal knotted domain occupies Thr183–Leu327. Asp191, Glu195, Glu227, and Glu231 together coordinate Mg(2+). Ser252 contacts substrate.

It belongs to the ketol-acid reductoisomerase family. It depends on Mg(2+) as a cofactor.

It carries out the reaction (2R)-2,3-dihydroxy-3-methylbutanoate + NAD(+) = (2S)-2-acetolactate + NADH + H(+). The enzyme catalyses (2R)-2,3-dihydroxy-3-methylbutanoate + NADP(+) = (2S)-2-acetolactate + NADPH + H(+). The protein operates within amino-acid biosynthesis; L-isoleucine biosynthesis; L-isoleucine from 2-oxobutanoate: step 2/4. It participates in amino-acid biosynthesis; L-valine biosynthesis; L-valine from pyruvate: step 2/4. Involved in the biosynthesis of branched-chain amino acids (BCAA). Catalyzes an alkyl-migration followed by a ketol-acid reduction of (S)-2-acetolactate (S2AL) to yield (R)-2,3-dihydroxy-isovalerate. In the isomerase reaction, S2AL is rearranged via a Mg-dependent methyl migration to produce 3-hydroxy-3-methyl-2-ketobutyrate (HMKB). In the reductase reaction, this 2-ketoacid undergoes a metal-dependent reduction by NADPH or NADH to yield (R)-2,3-dihydroxy-isovalerate. The protein is Ketol-acid reductoisomerase (NAD(P)(+)) of Hydrogenobaculum sp. (strain Y04AAS1).